A 356-amino-acid chain; its full sequence is S-adenosylmethionine:tRNA ribosyltransferase-isomerase (356 aa).

The protein belongs to the QueA family. As to quaternary structure, monomer.

The protein resides in the cytoplasm. The catalysed reaction is 7-aminomethyl-7-carbaguanosine(34) in tRNA + S-adenosyl-L-methionine = epoxyqueuosine(34) in tRNA + adenine + L-methionine + 2 H(+). Its pathway is tRNA modification; tRNA-queuosine biosynthesis. Functionally, transfers and isomerizes the ribose moiety from AdoMet to the 7-aminomethyl group of 7-deazaguanine (preQ1-tRNA) to give epoxyqueuosine (oQ-tRNA). The chain is S-adenosylmethionine:tRNA ribosyltransferase-isomerase from Xanthomonas euvesicatoria pv. vesicatoria (strain 85-10) (Xanthomonas campestris pv. vesicatoria).